A 1194-amino-acid polypeptide reads, in one-letter code: Metabotropic glutamate receptor 1 (1194 aa).

Residues 1–18 (MVGLLLFFFPAIFLEVSL) form the signal peptide. Over 19–592 (LPRSPGRKVL…VRYLEWSNIE (574 aa)) the chain is Extracellular. Cys-67 and Cys-109 are disulfide-bonded. Residue Tyr-74 participates in L-glutamate binding. A glycan (N-linked (GlcNAc...) asparagine) is linked at Asn-98. L-glutamate is bound by residues Ser-165 and 186–188 (SAT). The N-linked (GlcNAc...) asparagine glycan is linked to Asn-223. Position 236 (Tyr-236) interacts with L-glutamate. Residues Cys-289 and Cys-291 are joined by a disulfide bond. Asp-318 is an L-glutamate binding site. A disulfide bridge links Cys-378 with Cys-394. The N-linked (GlcNAc...) asparagine glycan is linked to Asn-397. Lys-409 lines the L-glutamate pocket. A disulfide bridge connects residues Cys-432 and Cys-439. Residue Asn-515 is glycosylated (N-linked (GlcNAc...) asparagine). A helical membrane pass occupies residues 593 to 615 (SIIAIAFSCLGILVTLFVTLIFV). Topologically, residues 616 to 629 (LYRDTPVVKSSSRE) are cytoplasmic. The helical transmembrane segment at 630–650 (LCYIILAGIFLGYVCPFTLIA) threads the bilayer. Topologically, residues 651-658 (KPTTTSCY) are extracellular. Cys-657 and Cys-746 are disulfide-bonded. A helical membrane pass occupies residues 659 to 680 (LQRLLVGLSSAMCYSALVTKTN). The Cytoplasmic portion of the chain corresponds to 681-703 (RIARILAGSKKKICTRKPRFMSA). Residues 704–727 (WAQVIIASILISVQLTLVVTLIIM) traverse the membrane as a helical segment. Over 728-750 (EPPMPILSYPSIKEVYLICNTSN) the chain is Extracellular. A helical membrane pass occupies residues 751–772 (LGVVAPLGYNGLLIMSCTYYAF). Over 773–785 (KTRNVPANFNEAK) the chain is Cytoplasmic. A helical membrane pass occupies residues 786 to 807 (YIAFTMYTTCIIWLAFVPIYFG). The Extracellular portion of the chain corresponds to 808-815 (SNYKIITT). A helical membrane pass occupies residues 816 to 840 (CFAVSLSVTVALGCMFTPKMYIIIA). Over 841 to 1194 (KPERNVRSAF…RDYKQSSSTL (354 aa)) the chain is Cytoplasmic. Ser-853 carries the phosphoserine modification. Thr-871 bears the Phosphothreonine mark. The disordered stretch occupies residues 883-905 (AGNANSNGKSVSWSEPGGGQVPK). Residues 885–895 (NANSNGKSVSW) are compositionally biased toward polar residues. 2 positions are modified to phosphoserine: Ser-894 and Ser-969. The interval 1007-1030 (PALPKGLPPPLQQQQQPPPQQKSL) is disordered. Positions 1012 to 1026 (GLPPPLQQQQQPPPQ) are enriched in pro residues. A Phosphoserine modification is found at Ser-1091. The tract at residues 1113–1173 (HEREGNTEED…SPVSESVLCT (61 aa)) is disordered. Positions 1119 to 1131 (TEEDELEEEEEDL) are enriched in acidic residues. Ser-1142 is modified (phosphoserine). Thr-1146 carries the phosphothreonine modification. Ser-1149 carries the phosphoserine modification. Residues 1154–1170 (SVASGSSVPSSPVSESV) show a composition bias toward low complexity.

Belongs to the G-protein coupled receptor 3 family. Homodimer; disulfide-linked. The PPXXF motif binds HOMER1, HOMER2 and HOMER3. Interacts with TAMALIN. Interacts with RYR1, RYR2, ITPR1, SHANK1 and SHANK3. Interacts with SIAH1. In terms of tissue distribution, detected in brain.

Its subcellular location is the cell membrane. The protein resides in the postsynaptic cell membrane. It localises to the cell projection. The protein localises to the dendrite. With respect to regulation, signaling is inhibited by the antagonist LY341495. The LY341495 binding site partially overlaps with the glutamate binding site. Signaling is also inhibited by synthetic allosteric regulators, such as FITM (4-fluoro-N-(4-(6-(isopropylamino)pyrimidin-4-yl)thiazol-2-yl)-N-methylbenzamide) that bind in a pocket between the transmembrane helices. Its function is as follows. G-protein coupled receptor for glutamate. Ligand binding causes a conformation change that triggers signaling via guanine nucleotide-binding proteins (G proteins) and modulates the activity of down-stream effectors. Signaling activates a phosphatidylinositol-calcium second messenger system. May participate in the central action of glutamate in the CNS, such as long-term potentiation in the hippocampus and long-term depression in the cerebellum. May function in the light response in the retina. Induces GRID1 and GRID2 cation-channel activation via GNAQ-PLC-PKC pathway in dopaminergic neurons and cerebellar Purkinje cell, respectively. In Homo sapiens (Human), this protein is Metabotropic glutamate receptor 1 (GRM1).